The primary structure comprises 390 residues: F-box/kelch-repeat protein At4g39753 (390 aa).

Positions 1-16 (MVTFWAETAASAATTS) are enriched in low complexity. The segment at 1–33 (MVTFWAETAASAATTSKGEPPSKKRKTNPSPPP) is disordered. Residues 32-79 (PPSLLSLPDVLILNCLSRIPKSYYPKLSIVSKTFRDLIISIDLNHARF) enclose the F-box domain. Kelch repeat units follow at residues 139–192 (PLLV…VFDR), 193–243 (KIYV…MIQG), 245–286 (FYVR…WYSC), and 288–321 (PNSF…LIET).

This Arabidopsis thaliana (Mouse-ear cress) protein is F-box/kelch-repeat protein At4g39753.